The chain runs to 166 residues: Lipoprotein signal peptidase (166 aa).

A run of 4 helical transmembrane segments spans residues 10–30 (GGAL…DQLT), 46–66 (LTPF…GFLA), 71–91 (WQRW…CYLL), and 100–120 (FSLS…DRLI). Residues D126 and D144 contribute to the active site. The helical transmembrane segment at 135–155 (WHWPAFNLADSAITVGAVLLI) threads the bilayer.

The protein belongs to the peptidase A8 family.

It localises to the cell inner membrane. It carries out the reaction Release of signal peptides from bacterial membrane prolipoproteins. Hydrolyzes -Xaa-Yaa-Zaa-|-(S,diacylglyceryl)Cys-, in which Xaa is hydrophobic (preferably Leu), and Yaa (Ala or Ser) and Zaa (Gly or Ala) have small, neutral side chains.. The protein operates within protein modification; lipoprotein biosynthesis (signal peptide cleavage). In terms of biological role, this protein specifically catalyzes the removal of signal peptides from prolipoproteins. The polypeptide is Lipoprotein signal peptidase (Burkholderia thailandensis (strain ATCC 700388 / DSM 13276 / CCUG 48851 / CIP 106301 / E264)).